Consider the following 337-residue polypeptide: Phenylalanine--tRNA ligase alpha subunit (337 aa).

E252 provides a ligand contact to Mg(2+).

Belongs to the class-II aminoacyl-tRNA synthetase family. Phe-tRNA synthetase alpha subunit type 1 subfamily. As to quaternary structure, tetramer of two alpha and two beta subunits. Mg(2+) is required as a cofactor.

The protein localises to the cytoplasm. It catalyses the reaction tRNA(Phe) + L-phenylalanine + ATP = L-phenylalanyl-tRNA(Phe) + AMP + diphosphate + H(+). The sequence is that of Phenylalanine--tRNA ligase alpha subunit from Francisella tularensis subsp. mediasiatica (strain FSC147).